The sequence spans 1448 residues: Probable serine/threonine-protein kinase irlB (1448 aa).

The span at 412 to 423 (DDDDYDDYDDDD) shows a compositional bias: acidic residues. The disordered stretch occupies residues 412–446 (DDDDYDDYDDDDDHHSGCNNNNNNNNDGDHNEDEN). The span at 428 to 437 (GCNNNNNNNN) shows a compositional bias: low complexity. Coiled-coil stretches lie at residues 666–817 (AESE…EIQN), 887–921 (EIQLEEENQKKKEMETIDEYEEININKKQINSNMK), and 974–1016 (ENNK…QDED). Residues 975 to 1008 (NNKKQNLINDNNNNNNNNNNNNNNNNNNNNNNKL) form a disordered region. A compositionally biased stretch (low complexity) spans 978-1008 (KQNLINDNNNNNNNNNNNNNNNNNNNNNNKL). Residues 1027–1293 (RNESNILGRG…IQNVLNHPLF (267 aa)) enclose the Protein kinase domain. ATP is bound by residues 1033-1041 (LGRGSNGTL) and Lys-1056. Asp-1151 (proton acceptor) is an active-site residue. In terms of domain architecture, KEN spans 1296 to 1448 (LEKKIQFIDA…TIDYLFNFYN (153 aa)).

Belongs to the protein kinase superfamily. Ser/Thr protein kinase family.

It catalyses the reaction L-seryl-[protein] + ATP = O-phospho-L-seryl-[protein] + ADP + H(+). The catalysed reaction is L-threonyl-[protein] + ATP = O-phospho-L-threonyl-[protein] + ADP + H(+). In Dictyostelium discoideum (Social amoeba), this protein is Probable serine/threonine-protein kinase irlB (irlB-1).